The sequence spans 220 residues: MTAIRNVKGILGTKLGMTQVWDENNKLVPVTVVQADSNVVTQLRDAAKDGYTAVQIGYGQIDPRKVTKPLAGHFEKAGVTPRRHVVELRTNDSDAYSLGQELSVEIFEAGQKVDVVGTSKGKGFAGVMKRHGFHGVGASHGAHKNHRKPGSIGGASTPSRVFKGLKMAGRMGGERHTTLNLTVHAIDAEKSLLLIKGAIPGARGRVVLVRTAVKTTVKGA.

The interval 137 to 159 is disordered; sequence GASHGAHKNHRKPGSIGGASTPS.

Belongs to the universal ribosomal protein uL3 family. As to quaternary structure, part of the 50S ribosomal subunit. Forms a cluster with proteins L14 and L19.

Its function is as follows. One of the primary rRNA binding proteins, it binds directly near the 3'-end of the 23S rRNA, where it nucleates assembly of the 50S subunit. The sequence is that of Large ribosomal subunit protein uL3 from Renibacterium salmoninarum (strain ATCC 33209 / DSM 20767 / JCM 11484 / NBRC 15589 / NCIMB 2235).